The chain runs to 795 residues: Phenylalanine--tRNA ligase beta subunit (795 aa).

The 110-residue stretch at 39–148 (AGQFHGVVVG…IDAPLGVDLR (110 aa)) folds into the tRNA-binding domain. Residues 401-476 (PQSATITLRR…RIYGYNNIPD (76 aa)) form the B5 domain. Asp-454, Asp-460, Glu-463, and Glu-464 together coordinate Mg(2+). The FDX-ACB domain maps to 701-794 (SRFPSNRRDI…LKQRFQASLR (94 aa)).

This sequence belongs to the phenylalanyl-tRNA synthetase beta subunit family. Type 1 subfamily. In terms of assembly, tetramer of two alpha and two beta subunits. The cofactor is Mg(2+).

It localises to the cytoplasm. The catalysed reaction is tRNA(Phe) + L-phenylalanine + ATP = L-phenylalanyl-tRNA(Phe) + AMP + diphosphate + H(+). This Photorhabdus laumondii subsp. laumondii (strain DSM 15139 / CIP 105565 / TT01) (Photorhabdus luminescens subsp. laumondii) protein is Phenylalanine--tRNA ligase beta subunit.